The chain runs to 138 residues: Transposon Tn10 TetD protein (138 aa).

Residues lysine 31 to asparagine 129 form the HTH araC/xylS-type domain. 2 consecutive DNA-binding regions (H-T-H motif) follow at residues aspartate 48–threonine 69 and isoleucine 96–phenylalanine 119.

The protein is Transposon Tn10 TetD protein (tetD) of Escherichia coli.